A 167-amino-acid chain; its full sequence is Mitochondrial inner membrane protease subunit 1 (167 aa).

Active-site residues include Ser40 and Lys83.

The protein belongs to the peptidase S26 family. IMP1 subfamily. Heterodimer of 2 subunits, IMMPL1 and IMMPL2.

The protein localises to the mitochondrion inner membrane. In terms of biological role, catalyzes the removal of transit peptides required for the targeting of proteins from the mitochondrial matrix, across the inner membrane, into the inter-membrane space. The polypeptide is Mitochondrial inner membrane protease subunit 1 (immp1l) (Xenopus tropicalis (Western clawed frog)).